Consider the following 93-residue polypeptide: Small ribosomal subunit protein mS33 (93 aa).

Belongs to the mitochondrion-specific ribosomal protein mS33 family. As to quaternary structure, component of the mitochondrial small ribosomal subunit (mt-SSU). Mature yeast 74S mitochondrial ribosomes consist of a small (37S) and a large (54S) subunit. The 37S small subunit contains a 15S ribosomal RNA (15S mt-rRNA) and at least 32 different proteins. The 54S large subunit contains a 21S rRNA (21S mt-rRNA) and at least 45 different proteins.

It localises to the mitochondrion. Component of the mitochondrial ribosome (mitoribosome), a dedicated translation machinery responsible for the synthesis of mitochondrial genome-encoded proteins, including at least some of the essential transmembrane subunits of the mitochondrial respiratory chain. The mitoribosomes are attached to the mitochondrial inner membrane and translation products are cotranslationally integrated into the membrane. This is Small ribosomal subunit protein mS33 (rsm27) from Schizosaccharomyces pombe (strain 972 / ATCC 24843) (Fission yeast).